A 312-amino-acid chain; its full sequence is Serine/threonine-protein phosphatase CPPED1 (312 aa).

At Ser-2 the chain carries Phosphoserine. Positions 47 to 250 are catalytic; that stretch reads KAWSTGNCDA…AVFSGHYHRN (204 aa). The a divalent metal cation site is built by Asp-90, Asn-127, and His-246. A Phosphoserine modification is found at Ser-293.

Belongs to the metallophosphoesterase superfamily. CPPED1 family. It depends on a divalent metal cation as a cofactor.

Its subcellular location is the cytoplasm. It carries out the reaction O-phospho-L-seryl-[protein] + H2O = L-seryl-[protein] + phosphate. The enzyme catalyses O-phospho-L-threonyl-[protein] + H2O = L-threonyl-[protein] + phosphate. In terms of biological role, protein phosphatase that dephosphorylates AKT family kinase specifically at 'Ser-473', blocking cell cycle progression and promoting cell apoptosis. May play an inhibitory role in glucose uptake by adipocytes. In Mus musculus (Mouse), this protein is Serine/threonine-protein phosphatase CPPED1 (Cpped1).